The following is a 281-amino-acid chain: Pantothenate synthetase (281 aa).

31 to 38 (MGNLHAGH) lines the ATP pocket. H38 (proton donor) is an active-site residue. (R)-pantoate is bound at residue Q62. Q62 contacts beta-alanine. Residue 150-153 (GKKD) coordinates ATP. Residue Q156 coordinates (R)-pantoate. ATP is bound by residues V179 and 187-190 (MSSR).

It belongs to the pantothenate synthetase family. As to quaternary structure, homodimer.

It localises to the cytoplasm. It catalyses the reaction (R)-pantoate + beta-alanine + ATP = (R)-pantothenate + AMP + diphosphate + H(+). It functions in the pathway cofactor biosynthesis; (R)-pantothenate biosynthesis; (R)-pantothenate from (R)-pantoate and beta-alanine: step 1/1. Functionally, catalyzes the condensation of pantoate with beta-alanine in an ATP-dependent reaction via a pantoyl-adenylate intermediate. The sequence is that of Pantothenate synthetase from Xylella fastidiosa (strain M12).